A 102-amino-acid chain; its full sequence is Putative pterin-4-alpha-carbinolamine dehydratase (102 aa).

It belongs to the pterin-4-alpha-carbinolamine dehydratase family.

It carries out the reaction (4aS,6R)-4a-hydroxy-L-erythro-5,6,7,8-tetrahydrobiopterin = (6R)-L-erythro-6,7-dihydrobiopterin + H2O. The polypeptide is Putative pterin-4-alpha-carbinolamine dehydratase (Burkholderia multivorans (strain ATCC 17616 / 249)).